The following is a 232-amino-acid chain: Ribosomal RNA small subunit methyltransferase G (232 aa).

S-adenosyl-L-methionine-binding positions include G93, L98, 144-145 (VE), and R163.

It belongs to the methyltransferase superfamily. RNA methyltransferase RsmG family.

The protein resides in the cytoplasm. It carries out the reaction guanosine(527) in 16S rRNA + S-adenosyl-L-methionine = N(7)-methylguanosine(527) in 16S rRNA + S-adenosyl-L-homocysteine. In terms of biological role, specifically methylates the N7 position of guanine in position 527 of 16S rRNA. The protein is Ribosomal RNA small subunit methyltransferase G of Burkholderia pseudomallei (strain 1710b).